Consider the following 810-residue polypeptide: Exocyst complex component 6B (810 aa).

Positions 79–118 form a coiled coil; that stretch reads TELLKVRGEAQKLKNQVTDTNRKLQHEGKELVIAMEELKQ. Residues 258–282 are disordered; the sequence is ESTSPKSEQDSGILDVEDEEDDEEV. The segment covering 272–282 has biased composition (acidic residues); it reads DVEDEEDDEEV.

It belongs to the SEC15 family. The exocyst complex is composed of SEC3, SEC5, SEC6, SEC8, SEC10, SEC15, EXO70 and EXO84.

Component of the exocyst complex involved in the docking of exocytic vesicles with fusion sites on the plasma membrane. This chain is Exocyst complex component 6B (Exoc6b), found in Mus musculus (Mouse).